A 400-amino-acid polypeptide reads, in one-letter code: Exodeoxyribonuclease 7 large subunit (400 aa).

The protein belongs to the XseA family. In terms of assembly, heterooligomer composed of large and small subunits.

It localises to the cytoplasm. The enzyme catalyses Exonucleolytic cleavage in either 5'- to 3'- or 3'- to 5'-direction to yield nucleoside 5'-phosphates.. Functionally, bidirectionally degrades single-stranded DNA into large acid-insoluble oligonucleotides, which are then degraded further into small acid-soluble oligonucleotides. The protein is Exodeoxyribonuclease 7 large subunit of Clostridium kluyveri (strain NBRC 12016).